The following is a 206-amino-acid chain: Translation machinery-associated protein 22 (206 aa).

The 72-residue stretch at 98–169 folds into the SUI1 domain; sequence VVIKREARTK…EVEKYIHSLL (72 aa). Residues 184 to 206 form a disordered region; the sequence is SQKKKKKPTDEANSNNNNNNNNK. Residues 196–206 show a composition bias toward low complexity; the sequence is NSNNNNNNNNK.

It belongs to the DENR family. As to quaternary structure, interacts with the 40S ribosomal subunit.

It is found in the cytoplasm. The chain is Translation machinery-associated protein 22 (TMA22) from Vanderwaltozyma polyspora (strain ATCC 22028 / DSM 70294 / BCRC 21397 / CBS 2163 / NBRC 10782 / NRRL Y-8283 / UCD 57-17) (Kluyveromyces polysporus).